The following is a 369-amino-acid chain: Anhydro-N-acetylmuramic acid kinase (369 aa).

12-19 is an ATP binding site; it reads GTSLDGVD.

This sequence belongs to the anhydro-N-acetylmuramic acid kinase family.

The enzyme catalyses 1,6-anhydro-N-acetyl-beta-muramate + ATP + H2O = N-acetyl-D-muramate 6-phosphate + ADP + H(+). It functions in the pathway amino-sugar metabolism; 1,6-anhydro-N-acetylmuramate degradation. It participates in cell wall biogenesis; peptidoglycan recycling. In terms of biological role, catalyzes the specific phosphorylation of 1,6-anhydro-N-acetylmuramic acid (anhMurNAc) with the simultaneous cleavage of the 1,6-anhydro ring, generating MurNAc-6-P. Is required for the utilization of anhMurNAc either imported from the medium or derived from its own cell wall murein, and thus plays a role in cell wall recycling. This Shigella flexneri serotype 5b (strain 8401) protein is Anhydro-N-acetylmuramic acid kinase.